The primary structure comprises 322 residues: uncharacterized protein (322 aa).

Disordered stretches follow at residues 1–51 (MARS…GAWA) and 107–130 (QERQNVEGGPEGLHLEPGNEDRPD). Residues 119-130 (LHLEPGNEDRPD) are compositionally biased toward basic and acidic residues.

As to expression, expressed in skin and fetal lung.

This is an uncharacterized protein from Homo sapiens (Human).